The following is a 356-amino-acid chain: Septin-2A (356 aa).

The region spanning 33–305 (KGFEFTLMVV…ENFRSERLKK (273 aa)) is the Septin-type G domain. Residues 43–50 (GESGLGKS) form a G1 motif region. GTP is bound by residues 43-50 (GESGLGKS), Thr-77, Gly-103, 182-190 (KADTLTLRE), Gly-240, and Arg-255. The segment at 100–103 (DTPG) is G3 motif. Positions 181–184 (AKAD) are G4 motif. The important for dimerization stretch occupies residues 259 to 269 (WGVVEVENTEH).

This sequence belongs to the TRAFAC class TrmE-Era-EngA-EngB-Septin-like GTPase superfamily. Septin GTPase family. In terms of assembly, septins polymerize into heterooligomeric protein complexes that form filaments, and associate with cellular membranes, actin filaments and microtubules. GTPase activity is required for filament formation. Can form heterooligomers with other family members and form filaments. Interacts with wdpcp.

Its subcellular location is the cytoplasm. The protein resides in the cytoskeleton. It is found in the spindle. The protein localises to the cleavage furrow. It localises to the midbody. Its subcellular location is the cell projection. The protein resides in the cilium membrane. Filament-forming cytoskeletal GTPase. Required for normal organization of the actin cytoskeleton. Plays a role in the biogenesis of polarized columnar-shaped epithelium. Required for the progression through mitosis through regulation of chromosome congression. During anaphase, may be required for chromosome segregation and spindle elongation. Probably plays a role in ciliogenesis and collective cell movements including convergent extension during gastrulation. In cilia, required for the integrity of the diffusion barrier at the base of the primary cilium that prevents diffusion of transmembrane proteins between the cilia and plasma membranes. Controls cell shape and not polarization of cells during convergent extension. The chain is Septin-2A (sept2-a) from Xenopus laevis (African clawed frog).